The following is a 380-amino-acid chain: 3-dehydroquinate synthase (380 aa).

Residues 118–122 (GVIGD), 142–143 (TS), Lys155, and Lys164 contribute to the NAD(+) site. Glu197, His259, and His278 together coordinate Zn(2+).

It belongs to the sugar phosphate cyclases superfamily. Dehydroquinate synthase family. Requires Co(2+) as cofactor. Zn(2+) serves as cofactor. It depends on NAD(+) as a cofactor.

Its subcellular location is the cytoplasm. It carries out the reaction 7-phospho-2-dehydro-3-deoxy-D-arabino-heptonate = 3-dehydroquinate + phosphate. It functions in the pathway metabolic intermediate biosynthesis; chorismate biosynthesis; chorismate from D-erythrose 4-phosphate and phosphoenolpyruvate: step 2/7. Catalyzes the conversion of 3-deoxy-D-arabino-heptulosonate 7-phosphate (DAHP) to dehydroquinate (DHQ). The protein is 3-dehydroquinate synthase of Sinorhizobium medicae (strain WSM419) (Ensifer medicae).